We begin with the raw amino-acid sequence, 406 residues long: NADH-ubiquinone oxidoreductase 49 kDa subunit (406 aa).

Belongs to the complex I 49 kDa subunit family. In terms of assembly, complex I is composed of 45 different subunits. Component of the iron-sulfur (IP) fragment of the enzyme.

It localises to the mitochondrion inner membrane. It catalyses the reaction a ubiquinone + NADH + 5 H(+)(in) = a ubiquinol + NAD(+) + 4 H(+)(out). Its function is as follows. Core subunit of the mitochondrial membrane respiratory chain NADH dehydrogenase (Complex I) that is believed to belong to the minimal assembly required for catalysis. Complex I functions in the transfer of electrons from NADH to the respiratory chain. The immediate electron acceptor for the enzyme is believed to be ubiquinone. This Dictyostelium discoideum (Social amoeba) protein is NADH-ubiquinone oxidoreductase 49 kDa subunit (nad7).